The primary structure comprises 492 residues: Ketol-acid reductoisomerase (NADP(+)) (492 aa).

In terms of domain architecture, KARI N-terminal Rossmann spans leucine 17–serine 208. NADP(+) contacts are provided by residues cysteine 45–glutamine 48, arginine 68, arginine 76, serine 78, and aspartate 108–glutamine 110. Histidine 132 is an active-site residue. Glycine 158 is an NADP(+) binding site. KARI C-terminal knotted domains are found at residues serine 209–glutamate 353 and tyrosine 354–methionine 487. Mg(2+)-binding residues include aspartate 217, glutamate 221, glutamate 389, and glutamate 393. Serine 414 is a substrate binding site.

This sequence belongs to the ketol-acid reductoisomerase family. The cofactor is Mg(2+).

It carries out the reaction (2R)-2,3-dihydroxy-3-methylbutanoate + NADP(+) = (2S)-2-acetolactate + NADPH + H(+). It catalyses the reaction (2R,3R)-2,3-dihydroxy-3-methylpentanoate + NADP(+) = (S)-2-ethyl-2-hydroxy-3-oxobutanoate + NADPH + H(+). The protein operates within amino-acid biosynthesis; L-isoleucine biosynthesis; L-isoleucine from 2-oxobutanoate: step 2/4. Its pathway is amino-acid biosynthesis; L-valine biosynthesis; L-valine from pyruvate: step 2/4. Its function is as follows. Involved in the biosynthesis of branched-chain amino acids (BCAA). Catalyzes an alkyl-migration followed by a ketol-acid reduction of (S)-2-acetolactate (S2AL) to yield (R)-2,3-dihydroxy-isovalerate. In the isomerase reaction, S2AL is rearranged via a Mg-dependent methyl migration to produce 3-hydroxy-3-methyl-2-ketobutyrate (HMKB). In the reductase reaction, this 2-ketoacid undergoes a metal-dependent reduction by NADPH to yield (R)-2,3-dihydroxy-isovalerate. The sequence is that of Ketol-acid reductoisomerase (NADP(+)) from Cytophaga hutchinsonii (strain ATCC 33406 / DSM 1761 / CIP 103989 / NBRC 15051 / NCIMB 9469 / D465).